The primary structure comprises 398 residues: Tyrosine--tRNA ligase (398 aa).

Positions 42-51 (PTAPDLHLGH) match the 'HIGH' region motif. Positions 226–230 (KMSKS) match the 'KMSKS' region motif. ATP is bound at residue Lys229. One can recognise an S4 RNA-binding domain in the interval 341–397 (AFLEAAGLVKSRGEAKRLIKEGALSVDGVRCDDANSPLASGEYVIKLGKKRFLRLTV).

It belongs to the class-I aminoacyl-tRNA synthetase family. TyrS type 2 subfamily. As to quaternary structure, homodimer.

The protein localises to the cytoplasm. The enzyme catalyses tRNA(Tyr) + L-tyrosine + ATP = L-tyrosyl-tRNA(Tyr) + AMP + diphosphate + H(+). Functionally, catalyzes the attachment of tyrosine to tRNA(Tyr) in a two-step reaction: tyrosine is first activated by ATP to form Tyr-AMP and then transferred to the acceptor end of tRNA(Tyr). In Nitratidesulfovibrio vulgaris (strain ATCC 29579 / DSM 644 / CCUG 34227 / NCIMB 8303 / VKM B-1760 / Hildenborough) (Desulfovibrio vulgaris), this protein is Tyrosine--tRNA ligase.